Here is a 286-residue protein sequence, read N- to C-terminus: Energy-coupling factor transporter ATP-binding protein EcfA2 (286 aa).

The ABC transporter domain occupies 3-246 (IRFDNVSYTY…KEKLADWHIG (244 aa)). ATP is bound at residue 40-47 (GQTGSGKS).

Belongs to the ABC transporter superfamily. Energy-coupling factor EcfA family. As to quaternary structure, forms a stable energy-coupling factor (ECF) transporter complex composed of 2 membrane-embedded substrate-binding proteins (S component), 2 ATP-binding proteins (A component) and 2 transmembrane proteins (T component).

The protein resides in the cell membrane. Its function is as follows. ATP-binding (A) component of a common energy-coupling factor (ECF) ABC-transporter complex. Unlike classic ABC transporters this ECF transporter provides the energy necessary to transport a number of different substrates. The polypeptide is Energy-coupling factor transporter ATP-binding protein EcfA2 (Staphylococcus aureus (strain MRSA252)).